Consider the following 353-residue polypeptide: UDP-N-acetylglucosamine--N-acetylmuramyl-(pentapeptide) pyrophosphoryl-undecaprenol N-acetylglucosamine transferase (353 aa).

UDP-N-acetyl-alpha-D-glucosamine contacts are provided by residues 10-12 (TGG), Asn124, Ser183, and Gln283.

Belongs to the glycosyltransferase 28 family. MurG subfamily.

Its subcellular location is the cell inner membrane. It carries out the reaction di-trans,octa-cis-undecaprenyl diphospho-N-acetyl-alpha-D-muramoyl-L-alanyl-D-glutamyl-meso-2,6-diaminopimeloyl-D-alanyl-D-alanine + UDP-N-acetyl-alpha-D-glucosamine = di-trans,octa-cis-undecaprenyl diphospho-[N-acetyl-alpha-D-glucosaminyl-(1-&gt;4)]-N-acetyl-alpha-D-muramoyl-L-alanyl-D-glutamyl-meso-2,6-diaminopimeloyl-D-alanyl-D-alanine + UDP + H(+). It functions in the pathway cell wall biogenesis; peptidoglycan biosynthesis. Its function is as follows. Cell wall formation. Catalyzes the transfer of a GlcNAc subunit on undecaprenyl-pyrophosphoryl-MurNAc-pentapeptide (lipid intermediate I) to form undecaprenyl-pyrophosphoryl-MurNAc-(pentapeptide)GlcNAc (lipid intermediate II). This Helicobacter pylori (strain ATCC 700392 / 26695) (Campylobacter pylori) protein is UDP-N-acetylglucosamine--N-acetylmuramyl-(pentapeptide) pyrophosphoryl-undecaprenol N-acetylglucosamine transferase.